We begin with the raw amino-acid sequence, 809 residues long: Zinc finger CCCH domain-containing protein 24 (809 aa).

At Met-1 the chain carries N-acetylmethionine. Positions 1–74 (METSSIEINE…NLESSDTKIT (74 aa)) are disordered. A compositionally biased stretch (polar residues) spans 30-46 (ETSSIDELPSSDSNATD). Over residues 51 to 65 (VGEKRKRADEDEKTN) the composition is skewed to basic and acidic residues. The C3H1-type zinc-finger motif lies at 79–107 (WWKTSLCSYFRREASCSHGNECKYAHGEA). Gln-536 and Glu-586 together coordinate S-adenosyl-L-methionine. Residues 652 to 693 (EEMTNSEHVADQNLPPSNTQVEELQDNEQKDSSSLEPEKTTK) are disordered. A compositionally biased stretch (basic and acidic residues) spans 678–692 (NEQKDSSSLEPEKTT). Asp-704 lines the S-adenosyl-L-methionine pocket. Cys-732 serves as the catalytic Nucleophile.

This sequence belongs to the class I-like SAM-binding methyltransferase superfamily. RNA M5U methyltransferase family.

In Arabidopsis thaliana (Mouse-ear cress), this protein is Zinc finger CCCH domain-containing protein 24.